We begin with the raw amino-acid sequence, 451 residues long: Charged multivesicular body protein 7 (451 aa).

The segment at 1–22 is disordered; that stretch reads MWSPEREAQAPTGGDPAGLLPP. The residue at position 232 (Ser-232) is a Phosphoserine. A coiled-coil region spans residues 248 to 312; the sequence is EQLLSRKVES…DTVQGILDRI (65 aa). At Thr-409 the chain carries Phosphothreonine. 3 positions are modified to phosphoserine: Ser-411, Ser-432, and Ser-442. The disordered stretch occupies residues 431-451; the sequence is LSEGGLIPSSKSPKRQLEPTL.

This sequence belongs to the SNF7 family. As to quaternary structure, interacts with CHMP4B, but not with VPS25. Interacts with LEMD2 (via C-terminus).

It localises to the cytoplasm. The protein resides in the nucleus envelope. In terms of biological role, ESCRT-III-like protein required to recruit the ESCRT-III complex to the nuclear envelope (NE) during late anaphase. Together with SPAST, the ESCRT-III complex promotes NE sealing and mitotic spindle disassembly during late anaphase. Recruited to the reforming NE during anaphase by LEMD2. Plays a role in the endosomal sorting pathway. The protein is Charged multivesicular body protein 7 (Chmp7) of Mus musculus (Mouse).